We begin with the raw amino-acid sequence, 2323 residues long: C2 domain-containing protein 3 (2323 aa).

Disordered stretches follow at residues 1–27, 193–215, 402–426, 444–509, 537–556, and 698–745; these read MKQR…SPST, RELR…SCRG, WNGL…DLND, SDVG…HTPA, PDSP…PPKP, and KLSS…TKKT. Polar residues predominate over residues 200 to 209; sequence ESSNTQSMIP. Serine 453 is modified (phosphoserine). The segment covering 474-483 has biased composition (basic and acidic residues); that stretch reads KVVESKEQKQ. The 160-residue stretch at 504-663 folds into the C2 1 domain; that stretch reads PGHTPAMSLS…IQSELLSFSS (160 aa). Polar residues predominate over residues 698–735; sequence KLSSSTQPAPVSAATSSDTILPETGQDTACTRNPQSSN. At serine 713 the chain carries Phosphoserine. 4 C2 domains span residues 771-903, 969-1131, 1155-1323, and 1383-1517; these read SCNL…SRLL, QPPV…YRED, SSGF…TGWY, and KEEE…TLTI. Residues 1550–1574 show a composition bias toward basic and acidic residues; sequence EPARELDSMDCSSHSESEQHPRKSD. 2 disordered regions span residues 1550–1599 and 1798–1824; these read EPAR…NSAA and LAHT…AARH. Polar residues predominate over residues 1584-1599; the sequence is LQTSPTSTQVHGNSAA. The C2 6 domain maps to 1598-1726; sequence AAAQVCPAQE…SGFQFICGWY (129 aa). Phosphoserine is present on serine 1871. Disordered stretches follow at residues 1891-1918, 1952-2013, 2074-2163, 2182-2231, and 2261-2323; these read FSSQ…GRQD, ALTS…GGML, SEVL…SVGW, SEAF…EVST, and SHSP…TEET. Residues 1892–1904 show a composition bias toward low complexity; it reads SSQSSPAVSQSQE. 2 stretches are compositionally biased toward polar residues: residues 1952–1965 and 2074–2083; these read ALTS…SRAV and SEVLSPQPTE. Residues 2110–2125 show a composition bias toward low complexity; the sequence is AVSPQPAQGSPSQSGV. The segment covering 2147–2158 has biased composition (polar residues); it reads PSLTFSEAQEGS. Low complexity predominate over residues 2182-2197; that stretch reads SEAFSSEFSDSSESFE. The span at 2207-2216 shows a compositional bias: basic and acidic residues; sequence SKREDYKDSP. Over residues 2222–2231 the composition is skewed to polar residues; that stretch reads QVPTGSEVST.

As to quaternary structure, interacts with OFD1; OFD1 may act as a negative regulator of C2CD3. Associates with the BBSome complex. Interacts with IFT88, BBS4 and PCM1.

The protein resides in the cytoplasm. It localises to the cytoskeleton. Its subcellular location is the cilium basal body. It is found in the microtubule organizing center. The protein localises to the centrosome. The protein resides in the centriole. In terms of biological role, component of the centrioles that acts as a positive regulator of centriole elongation. Promotes assembly of centriolar distal appendage, a structure at the distal end of the mother centriole that acts as an anchor of the cilium, and is required for recruitment of centriolar distal appendages proteins CEP83, SCLT1, CEP89, FBF1 and CEP164. Not required for centriolar satellite integrity or RAB8 activation. Required for primary cilium formation. Required for sonic hedgehog/SHH signaling and for proteolytic processing of GLI3. The polypeptide is C2 domain-containing protein 3 (C2cd3) (Mus musculus (Mouse)).